Here is a 482-residue protein sequence, read N- to C-terminus: Cardiolipin synthase (482 aa).

2 helical membrane-spanning segments follow: residues 4–24 (LAYL…VTVF) and 34–54 (WAWL…YLIF). 2 PLD phosphodiesterase domains span residues 217–244 (LNYR…GDEY) and 395–422 (DNGF…DFRS). Residues H222, K224, D229, H400, K402, and D407 contribute to the active site.

Belongs to the phospholipase D family. Cardiolipin synthase subfamily.

It localises to the cell membrane. It catalyses the reaction 2 a 1,2-diacyl-sn-glycero-3-phospho-(1'-sn-glycerol) = a cardiolipin + glycerol. Functionally, catalyzes the reversible phosphatidyl group transfer from one phosphatidylglycerol molecule to another to form cardiolipin (CL) (diphosphatidylglycerol) and glycerol. In Listeria welshimeri serovar 6b (strain ATCC 35897 / DSM 20650 / CCUG 15529 / CIP 8149 / NCTC 11857 / SLCC 5334 / V8), this protein is Cardiolipin synthase (cls).